Reading from the N-terminus, the 222-residue chain is MVSYHICEYQDSDYKSVVDVFTKGAEEYIPSTFRHLLLLPRTLLLLLGVSLALVLVSGSWLLAVVCIFFLLPFLWFLAGQPWKNYVSKCLHTDMADITKSYLSDRGSGFWVAESGEQVVGTVGALPVKEPPSGRKQLQLFHLAVSSQHRGQGIAKALVRTVLQFARDQGYTDVVLETSTMQIGAVTLYLGMGFQKTGQYFPSMLWRLVGIRFVQLNYSFPSA.

Residues 1–42 (MVSYHICEYQDSDYKSVVDVFTKGAEEYIPSTFRHLLLLPRT) are Cytoplasmic-facing. The helical; Signal-anchor for type II membrane protein transmembrane segment at 43-67 (LLLLLGVSLALVLVSGSWLLAVVCI) threads the bilayer. One can recognise an N-acetyltransferase domain in the interval 62 to 217 (LAVVCIFFLL…VGIRFVQLNY (156 aa)). Residues 68 to 222 (FFLLPFLWFL…VQLNYSFPSA (155 aa)) are Lumenal-facing. The residue at position 99 (lysine 99) is an N6-acetyllysine.

It belongs to the NAT8 family. Post-translationally, acetylation on Lys-99 modulates enzymatic activity.

It localises to the endoplasmic reticulum-Golgi intermediate compartment membrane. Its subcellular location is the endoplasmic reticulum membrane. It catalyses the reaction L-lysyl-[protein] + acetyl-CoA = N(6)-acetyl-L-lysyl-[protein] + CoA + H(+). Its function is as follows. Endoplasmic reticulum (ER)-membrane-bound lysine N-acetyltransferase catalyzing the N6-acetylation of lysine residues in the lumen of the ER in various proteins, including PROM1 and BACE1, using acetyl-CoA as acetyl donor. Thereby, may regulate apoptosis through the acetylation and the regulation of the expression of PROM1. Acetylates and stabilizes BACE1 immature protein, leading to increased steady-state levels in neurons. By acting on BACE1 expression, may regulate amyloid beta-peptide formation. N(6)-lysine acetylation in ER maintains protein homeostasis and regulates reticulophagy. The protein is N-acetyltransferase 8B of Rattus norvegicus (Rat).